Here is a 184-residue protein sequence, read N- to C-terminus: Late embryogenesis abundant protein (184 aa).

The tract at residues 49–184 (TGNIAEYPTE…KLPGHHNHHP (136 aa)) is disordered. A compositionally biased stretch (low complexity) spans 60–86 (PPAGVAAGTGAAATTAAGVTTSETTTG). 2 stretches are compositionally biased toward basic and acidic residues: residues 87–98 (QEHHGSLGEHLR) and 122–138 (KDKI…KDEQ). The segment covering 139–159 (TPTTATTTGPTTTTTTTGAAA) has biased composition (low complexity). Positions 160-177 (DQHHEKKGILEKIKEKLP) are enriched in basic and acidic residues.

This sequence belongs to the plant dehydrin family.

In terms of biological role, LEA protein are late embryogenesis abundant in higher plant seed embryos. There are two subsets of LEA proteins (5a, and 5b), the first ones are expressed when the cotyledon weight reach 80 mg and the second set are expressed above 100 mg. The function of those proteins is not known. The sequence is that of Late embryogenesis abundant protein from Raphanus sativus (Radish).